The following is a 1021-amino-acid chain: Probable calcium-transporting ATPase 6, plasma membrane-type (1021 aa).

Residues 1-155 (MEGGRSWSIE…RSFWMFVWDA (155 aa)) are Cytoplasmic-facing. The next 2 membrane-spanning stretches (helical) occupy residues 156-176 (LHDL…VVGL) and 181-201 (WPMG…VVLV). At 202–241 (TATSDYQQARKFMELDREKQKIYIRVTRDKKTKEVLVHDL) the chain is on the cytoplasmic side. The next 2 membrane-spanning stretches (helical) occupy residues 242–262 (VVGD…GLFI) and 338–358 (VATI…LVLL). At 359–384 (ARFLADKGMHVGLLNWSANDALTIVN) the chain is on the cytoplasmic side. The chain crosses the membrane as a helical span at residues 385-405 (YFAIAVTIIVVAVPEGLPLAV). The 4-aspartylphosphate intermediate role is filled by D441. The Mg(2+) site is built by D740 and D744. Residues 807-827 (IVALIVNFVSACIIGSAPLTA) form a helical membrane-spanning segment. The Cytoplasmic segment spans residues 828–829 (VQ). Transmembrane regions (helical) follow at residues 830 to 850 (LLWV…TEPP) and 879 to 899 (GLYQ…LLSI). The Cytoplasmic portion of the chain corresponds to 900 to 942 (EGPQSDKTINTLIFNSFVFCQVFNEINCREMEKINVLQGIFRN). The next 2 membrane-spanning stretches (helical) occupy residues 943-963 (WIFV…VEFL) and 974-994 (GELW…SVIL). Residues 995-1021 (KCIPVEFNKTNTKPHGYELIPEGPEIL) lie on the Cytoplasmic side of the membrane.

Belongs to the cation transport ATPase (P-type) (TC 3.A.3) family. Type IIB subfamily.

The protein resides in the membrane. The catalysed reaction is Ca(2+)(in) + ATP + H2O = Ca(2+)(out) + ADP + phosphate + H(+). With respect to regulation, activated by calmodulin. In terms of biological role, this magnesium-dependent enzyme catalyzes the hydrolysis of ATP coupled with the translocation of calcium from the cytosol out of the cell, into the endoplasmic reticulum, or into organelles. This is Probable calcium-transporting ATPase 6, plasma membrane-type from Oryza sativa subsp. japonica (Rice).